The following is a 325-amino-acid chain: MTASSVLLHTGQKMPLIGLGTWKSEPGQVKAAIKHALSAGYRHIDCASVYGNETEIGEALKESVGSGKAVPREELFVTSKLWNTKHHPEDVEPALRKTLADLQLEYLDLYLMHWPYAFERGDNPFPKNADGTVRYDSTHYKETWKALEVLVAKGLVKALGLSNFNSRQIDDVLSVASVRPAVLQVECHPYLAQNELIAHCHARGLEVTAYSPLGSSDRAWRHPDEPVLLEEPVVLALAEKHGRSPAQILLRWQVQRKVICIPKSINPSRILQNIQVFDFTFSPEEMKQLDALNKNWRYIVPMITVDGKRVPRDAGHPLYPFNDPY.

Position 2 is an N-acetylthreonine (T2). S4 is subject to Phosphoserine. NADP(+) is bound by residues 11–20, T21, and W22; that span reads GQKMPLIGLG. The residue at position 38 (S38) is a Phosphoserine. D45 is an NADP(+) binding site. Y50 acts as the Proton donor in catalysis. K127 bears the N6-acetyllysine; alternate mark. N6-succinyllysine; alternate is present on K127. An N6-succinyllysine modification is found at K145. NADP(+) contacts are provided by S162, N163, S211, L213, S215, S216, K263, S264, I265, R269, Q272, and N273. At S211 the chain carries Phosphoserine.

The protein belongs to the aldo/keto reductase family. Monomer. Widely expressed.

It is found in the cytoplasm. The protein resides in the cytosol. It localises to the apical cell membrane. It catalyses the reaction a primary alcohol + NADP(+) = an aldehyde + NADPH + H(+). The enzyme catalyses L-gulonate + NADP(+) = aldehydo-D-glucuronate + NADPH + H(+). It carries out the reaction L-gulono-1,4-lactone + NADP(+) = D-glucurono-3,6-lactone + NADPH + H(+). The catalysed reaction is allyl alcohol + NADP(+) = acrolein + NADPH + H(+). It catalyses the reaction glycerol + NADP(+) = D-glyceraldehyde + NADPH + H(+). The enzyme catalyses glycerol + NADP(+) = L-glyceraldehyde + NADPH + H(+). It carries out the reaction hydroxyacetone + NADP(+) = methylglyoxal + NADPH + H(+). The catalysed reaction is 3-deoxyfructose + NADP(+) = 3-deoxyglucosone + NADPH + H(+). It catalyses the reaction (R)-mevalonate + NADP(+) = (R)-mevaldate + NADPH + H(+). The enzyme catalyses pyridine 3-methanol + NADP(+) = pyridine-3-carbaldehyde + NADPH + H(+). It carries out the reaction S-nitroso-CoA + NADPH + H(+) = sulfinamide-CoA + NADP(+). The catalysed reaction is S-nitrosoglutathione + NADPH + H(+) = S-(hydroxysulfenamide)glutathione + NADP(+). Catalyzes the NADPH-dependent reduction of a wide variety of carbonyl-containing compounds to their corresponding alcohols. Displays enzymatic activity towards endogenous metabolites such as aromatic and aliphatic aldehydes, ketones, monosaccharides and bile acids, with a preference for negatively charged substrates, such as glucuronate and succinic semialdehyde. Plays an important role in ascorbic acid biosynthesis by catalyzing the reduction of D-glucuronic acid and D-glucurono-gamma-lactone. Functions as a detoxifiying enzyme by reducing a range of toxic aldehydes. Reduces methylglyoxal and 3-deoxyglucosone, which are present at elevated levels under hyperglycemic conditions and are cytotoxic. Involved in the detoxification of lipid-derived aldehydes like acrolein. Plays a role in the activation of procarcinogens, such as polycyclic aromatic hydrocarbon trans-dihydrodiols, and in the metabolism of various xenobiotics and drugs. Also acts as an inhibitor of protein S-nitrosylation by mediating degradation of S-nitroso-coenzyme A (S-nitroso-CoA), a cofactor required to S-nitrosylate proteins. S-nitroso-CoA reductase activity is involved in reprogramming intermediary metabolism in renal proximal tubules, notably by inhibiting protein S-nitrosylation of isoform 2 of PKM (PKM2). Also acts as a S-nitroso-glutathione reductase by catalyzing the NADPH-dependent reduction of S-nitrosoglutathione. Displays no reductase activity towards retinoids. The protein is Aldo-keto reductase family 1 member A1 of Mus musculus (Mouse).